A 288-amino-acid polypeptide reads, in one-letter code: Oxaloacetate decarboxylase (288 aa).

Serine 47 serves as a coordination point for substrate. Residue aspartate 85 coordinates Mg(2+). Residues arginine 156 and histidine 232 each contribute to the substrate site.

This sequence belongs to the isocitrate lyase/PEP mutase superfamily. Oxaloacetate decarboxylase family. As to quaternary structure, homotetramer; dimer of dimers. Requires Mg(2+) as cofactor.

The catalysed reaction is oxaloacetate + H(+) = pyruvate + CO2. Functionally, catalyzes the decarboxylation of oxaloacetate into pyruvate. Seems to play a role in maintaining cellular concentrations of bicarbonate and pyruvate. The protein is Oxaloacetate decarboxylase of Bradyrhizobium sp. (strain ORS 278).